We begin with the raw amino-acid sequence, 237 residues long: Demethylmenaquinone methyltransferase (237 aa).

S-adenosyl-L-methionine contacts are provided by residues Thr58, Asp79, and 106–107 (NA).

The protein belongs to the class I-like SAM-binding methyltransferase superfamily. MenG/UbiE family.

It carries out the reaction a 2-demethylmenaquinol + S-adenosyl-L-methionine = a menaquinol + S-adenosyl-L-homocysteine + H(+). The protein operates within quinol/quinone metabolism; menaquinone biosynthesis; menaquinol from 1,4-dihydroxy-2-naphthoate: step 2/2. In terms of biological role, methyltransferase required for the conversion of demethylmenaquinol (DMKH2) to menaquinol (MKH2). The polypeptide is Demethylmenaquinone methyltransferase (Bacillus cereus (strain ATCC 10987 / NRS 248)).